Consider the following 772-residue polypeptide: Semaphorin-3A (772 aa).

Residues 1–22 (MGWLRGIALLSLGVLLAGRVNC) form the signal peptide. A Sema domain is found at 31 to 514 (RLKLSYKEML…SATGVSQLPL (484 aa)). Residue Asn53 is glycosylated (N-linked (GlcNAc...) asparagine). An intrachain disulfide couples Cys103 to Cys114. A glycan (N-linked (GlcNAc...) asparagine) is linked at Asn125. Disulfide bonds link Cys132-Cys141, Cys269-Cys381, Cys293-Cys341, and Cys517-Cys535. Positions 576 to 665 (PSGQTLEEKI…GFIQTLLKVT (90 aa)) constitute an Ig-like C2-type domain. N-linked (GlcNAc...) asparagine glycosylation occurs at Asn591. An intrachain disulfide couples Cys650 to Cys723. The tract at residues 730 to 772 (DRKQRRQRPANAQVNTNKWKHLQENKKGRNRRTHEFERAPRSV) is disordered. Positions 750-772 (HLQENKKGRNRRTHEFERAPRSV) are enriched in basic and acidic residues.

Belongs to the semaphorin family. In terms of tissue distribution, expressed at relatively high levels in brain and muscle, moderate levels in lung, bursa, and heart and virtually absent in liver. Collapsin-1, -2, -3, and -5 bind to overlapping but distinct axon tracts.

It is found in the secreted. In terms of biological role, induces the collapse and paralysis of neuronal growth cones. Could serve as a ligand that guides specific growth cones by a motility-inhibiting mechanism. Binds to neuropilin. This is Semaphorin-3A (SEMA3A) from Gallus gallus (Chicken).